The chain runs to 86 residues: Small ribosomal subunit protein bS20 (86 aa).

The disordered stretch occupies residues 1 to 22; that stretch reads MANIASARKRARQAEKNRQHNM.

It belongs to the bacterial ribosomal protein bS20 family.

Its function is as follows. Binds directly to 16S ribosomal RNA. This is Small ribosomal subunit protein bS20 from Thioalkalivibrio sulfidiphilus (strain HL-EbGR7).